The primary structure comprises 752 residues: RNA-directed RNA polymerase catalytic subunit (752 aa).

2 short sequence motifs (nuclear localization signal) span residues isoleucine 187–asparagine 195 and arginine 203–glutamate 216. The interval arginine 249–glutamate 256 is promoter-binding site. One can recognise a RdRp catalytic domain in the interval valine 286–tyrosine 482.

Belongs to the influenza viruses polymerase PB1 family. As to quaternary structure, influenza RNA polymerase is composed of three subunits: PB1, PB2 and PA. Interacts (via N-terminus) with PA (via C-terminus). Interacts (via C-terminus) with PB2 (via N-terminus); this interaction is essential for transcription initiation. Phosphorylated by host PRKCA.

Its subcellular location is the host nucleus. The protein resides in the host cytoplasm. The enzyme catalyses RNA(n) + a ribonucleoside 5'-triphosphate = RNA(n+1) + diphosphate. Functionally, RNA-dependent RNA polymerase which is responsible for replication and transcription of virus RNA segments. The transcription of viral mRNAs occurs by a unique mechanism called cap-snatching. 5' methylated caps of cellular mRNAs are cleaved after 10-13 nucleotides by PA. In turn, these short capped RNAs are used as primers by PB1 for transcription of viral mRNAs. During virus replication, PB1 initiates RNA synthesis and copy vRNA into complementary RNA (cRNA) which in turn serves as a template for the production of more vRNAs. This chain is RNA-directed RNA polymerase catalytic subunit, found in Homo sapiens (Human).